Consider the following 3942-residue polypeptide: Protein bassoon (3942 aa).

The interval M1–I158 is disordered. A lipid anchor (N-myristoyl glycine) is attached at G2. Residues G9–A29 are compositionally biased toward gly residues. A compositionally biased stretch (low complexity) spans K31–G52. Residues P53–G71 are compositionally biased toward pro residues. The tract at residues P62 to G71 is 5 X 2 AA tandem repeats of P-G. Composition is skewed to polar residues over residues S85 to A98 and Q127 to S154. The residue at position 142 (S142) is a Phosphoserine. R145 carries the post-translational modification Omega-N-methylarginine. 2 consecutive C4-type zinc fingers follow at residues C167–C190 and C195–C217. 2 disordered regions span residues T228–Q341 and L362–P457. Positions A230–H240 are enriched in polar residues. Phosphoserine occurs at positions 241 and 245. Residues L362–K379 are compositionally biased toward polar residues. Residues P395–T407 show a composition bias toward pro residues. 2 consecutive C4-type zinc fingers follow at residues C464–C487 and C492–C514. Disordered stretches follow at residues G525 to G937, G950 to S1258, M1309 to S1553, and R1573 to G1625. The segment covering A528–G541 has biased composition (pro residues). Repeat copies occupy residues K570–T576, K577–T583, K584–T590, K591–T597, and K598–K604. The 5 X 7 AA tandem repeats of K-A-S-P-Q-[AT]-[AT] stretch occupies residues K570–K604. Polar residues predominate over residues P573–S600. The segment covering V632 to T645 has biased composition (pro residues). Residues Q684–L693 show a composition bias toward polar residues. Positions S694 to S708 are enriched in low complexity. A compositionally biased stretch (polar residues) spans E709–V718. 2 stretches are compositionally biased toward acidic residues: residues F787–S802 and S865–T876. Omega-N-methylarginine is present on R881. A compositionally biased stretch (basic and acidic residues) spans P895–R905. S980 carries the post-translational modification Phosphoserine. Low complexity predominate over residues P994 to S1011. The span at D1049–L1062 shows a compositional bias: acidic residues. Phosphoserine is present on residues S1050 and S1051. Residues L1063 to R1076 are compositionally biased toward basic and acidic residues. S1100 is subject to Phosphoserine. T1102 is modified (phosphothreonine). 2 positions are modified to phosphoserine: S1108 and S1114. Basic and acidic residues predominate over residues E1117–S1132. Low complexity-rich tracts occupy residues C1133–D1143 and S1173–P1190. Positions K1192–M1207 are enriched in basic and acidic residues. Residues Q1209 to R1219 show a composition bias toward low complexity. Residues S1226 to Q1240 are compositionally biased toward polar residues. A Phosphoserine modification is found at S1236. Low complexity predominate over residues S1333–S1343. An O-linked (GlcNAc) threonine glycan is attached at T1354. The segment covering F1357–K1366 has biased composition (basic and acidic residues). Residues S1370 to E1438 are compositionally biased toward polar residues. Residue T1395 is glycosylated (O-linked (GlcNAc) threonine). 3 positions are modified to phosphoserine: S1482, S1491, and S1493. Residues S1488–P1498 are compositionally biased toward low complexity. 2 stretches are compositionally biased toward polar residues: residues E1508 to I1522 and R1573 to P1609. O-linked (GlcNAc) serine glycosylation occurs at S1707. Residues R1792 and R1796 each carry the omega-N-methylarginine modification. Residue R1806 is modified to Asymmetric dimethylarginine; alternate. R1806 is modified (omega-N-methylarginine; alternate). Omega-N-methylarginine is present on R1818. 2 disordered regions span residues G1831–P1865 and P1926–Y1977. The span at A1844–S1856 shows a compositional bias: basic and acidic residues. The O-linked (GlcNAc) threonine glycan is linked to T1934. Phosphoserine is present on residues S1990 and S2046. Omega-N-methylarginine occurs at positions 2051 and 2081. Residues R2255, R2265, and R2270 each carry the asymmetric dimethylarginine modification. O-linked (GlcNAc) threonine glycosylation occurs at T2318. Disordered stretches follow at residues P2327–E2378, E2476–A2504, and T2524–A2663. Pro residues predominate over residues A2329–Q2342. Residues A2361 to E2378 are compositionally biased toward basic and acidic residues. Coiled coils occupy residues E2366–R2422 and L2453–A2483. An O-linked (GlcNAc) threonine glycan is attached at T2524. The span at S2541–E2551 shows a compositional bias: polar residues. Residue S2578 is modified to Phosphoserine. 2 positions are modified to phosphothreonine: T2595 and T2622. The segment covering R2643–A2655 has biased composition (basic and acidic residues). O-linked (GlcNAc) threonine glycosylation occurs at T2700. The tract at residues E2730–D3278 is interaction with DAO. A phosphoserine mark is found at S2811, S2860, and S2866. The segment at T2854–K2874 is disordered. A glycan (O-linked (GlcNAc) threonine) is linked at T2945. S3022 carries the phosphoserine modification. 3 disordered regions span residues P3051 to R3409, Y3431 to H3560, and E3581 to P3917. Polar residues predominate over residues T3073–G3083. The segment covering A3089–G3114 has biased composition (low complexity). Residues K3202–D3211 are compositionally biased toward basic and acidic residues. Positions R3212–P3237 are enriched in polar residues. At S3301 the chain carries Phosphoserine. 2 stretches are compositionally biased toward basic and acidic residues: residues G3330 to K3342 and Q3372 to E3391. At S3382 the chain carries Phosphoserine. Positions Y3447–G3461 are enriched in low complexity. Over residues L3464–Q3487 the composition is skewed to basic and acidic residues. The residue at position 3502 (R3502) is an Omega-N-methylarginine. The span at P3520–G3534 shows a compositional bias: low complexity. Basic and acidic residues-rich tracts occupy residues V3549–H3560 and W3592–D3602. Basic residues predominate over residues E3652–R3665. Positions H3666–P3690 are enriched in basic and acidic residues. Over residues T3750–P3820 the composition is skewed to low complexity. R3823 carries the omega-N-methylarginine modification. The span at K3835–P3851 shows a compositional bias: pro residues. Over residues Q3856 to A3891 the composition is skewed to low complexity.

As to quaternary structure, interacts with PCLO, ERC2/CAST1, RIMS1 and UNC13A. Interacts with TPRG1L. Interacts with DYNLL1 and DYNLL2; these interactions potentially link PTVs to dynein and myosin V motor complexes. Interacts with ATG5; this interaction is important for the regulation of presynaptic autophagy. Interacts (via C-terminus) with TRIO (via N-terminus). Interacts with CTBP1. Interacts with SIAH1; this interaction negatively regulates SIAH1 E3 ligase activity. Interacts (via coiled region) with DAO; the interaction is direct. Myristoylated. The N-terminal myristoylation is not sufficient for presynaptic localization. As to expression, expressed in brain and retina.

The protein resides in the cytoplasm. Its subcellular location is the presynaptic active zone. It is found in the cytoskeleton. It localises to the cytoplasmic vesicle. The protein localises to the secretory vesicle. The protein resides in the synaptic vesicle membrane. Functionally, scaffold protein of the presynaptic cytomatrix at the active zone (CAZ) which is the place in the synapse where neurotransmitter is released. After synthesis, participates in the formation of Golgi-derived membranous organelles termed Piccolo-Bassoon transport vesicles (PTVs) that are transported along axons to sites of nascent synaptic contacts. At the presynaptic active zone, regulates the spatial organization of synaptic vesicle cluster, the protein complexes that execute membrane fusion and compensatory endocytosis. Also functions in processes other than assembly such as the regulation of specific presynaptic protein ubiquitination by interacting with SIAH1 or the regulation of presynaptic autophagy by associating with ATG5. Also mediates synapse to nucleus communication leading to reconfiguration of gene expression by associating with the transcriptional corepressor CTBP1 and by subsequently reducing the size of its pool available for nuclear import. Inhibits the activity of the proportion of DAO enzyme that localizes to the presynaptic active zone, which may modulate synaptic transmission. The polypeptide is Protein bassoon (Mus musculus (Mouse)).